The chain runs to 1427 residues: Tonsoku-like protein (1427 aa).

The interval 1–21 (MTSTKEIKQLQKAKSKAQSSN) is disordered. Low complexity predominate over residues 10–21 (LQKAKSKAQSSN). 8 TPR repeats span residues 27–60 (ASLC…SEIL), 67–100 (AVAN…ARSV), 107–147 (QRAL…VDER), 162–195 (ARLL…AEKN), 202–235 (YRAN…ARKM), 242–275 (SECF…GSQQ), 311–344 (LDLS…AEAL), and 352–385 (AVIH…RKGN). The interval 465–502 (LSLDQSEDEDEEDEVDNSEPLEDSDIQYSESDDEDLEG) is disordered. Residues 469 to 501 (QSEDEDEEDEVDNSEPLEDSDIQYSESDDEDLE) show a composition bias toward acidic residues. ANK repeat units follow at residues 522-551 (KGET…PVNV), 555-584 (CGWT…NVND), and 591-620 (GGIT…SVTV). Disordered stretches follow at residues 692–801 (PLLR…SESG), 865–922 (KKKR…KMNQ), and 941–961 (IMTQ…QAMP). A compositionally biased stretch (low complexity) spans 742–761 (DDSSSSDNPDSDCSLSPLRP). The segment covering 773–783 (SPQEVPSSQEL) has biased composition (polar residues). Residues 871–880 (SEHNATRETT) are compositionally biased toward basic and acidic residues. Positions 881–890 (SRSQNNSSTI) are enriched in polar residues. The span at 899-910 (SCSSRGSLSLKK) shows a compositional bias: low complexity. LRR repeat units lie at residues 1113 to 1137 (QASL…MMAA), 1141 to 1168 (MPRL…AFET), 1174 to 1197 (FPCL…ALAS), 1234 to 1258 (TGNM…VLKT), 1293 to 1316 (DCPL…LLAR), 1321 to 1346 (CPSL…LLNG), and 1377 to 1400 (SDHI…ALQQ).

It belongs to the Tonsoku family. As to quaternary structure, component of the MMS22L-TONSL complex. Binds histones, with a strong preference for histone H3.1 (histones H3.1 and H3-4/H3.1t).

The protein resides in the nucleus. It localises to the chromosome. The protein localises to the cytoplasm. Its function is as follows. Component of the MMS22L-TONSL complex, a complex that promotes homologous recombination-mediated repair of double-strand breaks (DSBs) at stalled or collapsed replication forks. The MMS22L-TONSL complex is required to maintain genome integrity during DNA replication. It mediates the assembly of RAD51 filaments on single-stranded DNA (ssDNA): the MMS22L-TONSL complex is recruited to DSBs following histone replacement by histone chaperones and eviction of the replication protein A complex (RPA/RP-A) from DSBs. Following recruitment to DSBs, the TONSL-MMS22L complex promotes recruitment of RAD51 filaments and subsequent homologous recombination. Within the complex, TONSL acts as a histone reader, which recognizes and binds newly synthesized histones following their replacement by histone chaperones. This chain is Tonsoku-like protein (tonsl), found in Danio rerio (Zebrafish).